The primary structure comprises 352 residues: tRNA pseudouridine synthase D (352 aa).

Asp-81 (nucleophile) is an active-site residue. The region spanning 157–303 (GVPNYFGTQR…MDHERRILRL (147 aa)) is the TRUD domain.

This sequence belongs to the pseudouridine synthase TruD family.

The catalysed reaction is uridine(13) in tRNA = pseudouridine(13) in tRNA. Functionally, responsible for synthesis of pseudouridine from uracil-13 in transfer RNAs. The protein is tRNA pseudouridine synthase D of Pseudomonas putida (strain ATCC 700007 / DSM 6899 / JCM 31910 / BCRC 17059 / LMG 24140 / F1).